The following is a 130-amino-acid chain: Small ribosomal subunit protein eS17 (130 aa).

The protein belongs to the eukaryotic ribosomal protein eS17 family.

In Theileria parva (East coast fever infection agent), this protein is Small ribosomal subunit protein eS17 (RPS17).